The primary structure comprises 602 residues: Elongation factor 4 (602 aa).

Residues 7-189 (RNIRNFSIIA…AIVQRIPAPQ (183 aa)) form the tr-type G domain. Residues 19–24 (DHGKST) and 136–139 (NKID) each bind GTP.

It belongs to the TRAFAC class translation factor GTPase superfamily. Classic translation factor GTPase family. LepA subfamily.

The protein resides in the cell inner membrane. It catalyses the reaction GTP + H2O = GDP + phosphate + H(+). Its function is as follows. Required for accurate and efficient protein synthesis under certain stress conditions. May act as a fidelity factor of the translation reaction, by catalyzing a one-codon backward translocation of tRNAs on improperly translocated ribosomes. Back-translocation proceeds from a post-translocation (POST) complex to a pre-translocation (PRE) complex, thus giving elongation factor G a second chance to translocate the tRNAs correctly. Binds to ribosomes in a GTP-dependent manner. The sequence is that of Elongation factor 4 from Xylella fastidiosa (strain M23).